Reading from the N-terminus, the 294-residue chain is Tryptophan 2,3-dioxygenase (294 aa).

Residues F63–H67, Y125, and R129 each bind substrate. H252 provides a ligand contact to heme. T266 contributes to the substrate binding site.

The protein belongs to the tryptophan 2,3-dioxygenase family. As to quaternary structure, homotetramer. Heme is required as a cofactor.

It carries out the reaction L-tryptophan + O2 = N-formyl-L-kynurenine. It functions in the pathway amino-acid degradation; L-tryptophan degradation via kynurenine pathway; L-kynurenine from L-tryptophan: step 1/2. Heme-dependent dioxygenase that catalyzes the oxidative cleavage of the L-tryptophan (L-Trp) pyrrole ring and converts L-tryptophan to N-formyl-L-kynurenine. Catalyzes the oxidative cleavage of the indole moiety. The protein is Tryptophan 2,3-dioxygenase of Polaromonas sp. (strain JS666 / ATCC BAA-500).